Here is a 145-residue protein sequence, read N- to C-terminus: Secreted RxLR effector protein PSE1 (145 aa).

A signal peptide spans 1–21 (MRLSSFIVVGAAVVNLLTSGS). The RxLR-dEER motif lies at 53–73 (RLLRYHSNNNRGGDEDIAEER).

This sequence belongs to the RxLR effector family.

It localises to the secreted. It is found in the host cell. In terms of biological role, secreted effector that impairs both plant effector-triggered immunity and pathogen-associated molecular patterns (PAMP)-triggered immunity (PTI). Suppresses plant cell death as a part of the plant defense responses. Facilitates plant infection by altering the auxin content at the roots penetration points of the of the pathogen. In Phytophthora nicotianae (Potato buckeye rot agent), this protein is Secreted RxLR effector protein PSE1.